The primary structure comprises 426 residues: Phosphomethylpyrimidine synthase (426 aa).

Substrate-binding positions include N65, M94, Y123, H162, S184–G186, D225–R228, and E264. A Zn(2+)-binding site is contributed by H268. Residue Y291 participates in substrate binding. H332 contacts Zn(2+). Residues C408, C411, and C415 each coordinate [4Fe-4S] cluster.

Belongs to the ThiC family. It depends on [4Fe-4S] cluster as a cofactor.

The catalysed reaction is 5-amino-1-(5-phospho-beta-D-ribosyl)imidazole + S-adenosyl-L-methionine = 4-amino-2-methyl-5-(phosphooxymethyl)pyrimidine + CO + 5'-deoxyadenosine + formate + L-methionine + 3 H(+). It participates in cofactor biosynthesis; thiamine diphosphate biosynthesis. Functionally, catalyzes the synthesis of the hydroxymethylpyrimidine phosphate (HMP-P) moiety of thiamine from aminoimidazole ribotide (AIR) in a radical S-adenosyl-L-methionine (SAM)-dependent reaction. This Methanococcus maripaludis (strain C5 / ATCC BAA-1333) protein is Phosphomethylpyrimidine synthase.